Here is a 123-residue protein sequence, read N- to C-terminus: Small ribosomal subunit protein uS12cz/uS12cy (123 aa).

It belongs to the universal ribosomal protein uS12 family. In terms of assembly, part of the 30S ribosomal subunit.

It is found in the plastid. Its subcellular location is the chloroplast. In terms of biological role, with S4 and S5 plays an important role in translational accuracy. Located at the interface of the 30S and 50S subunits. This chain is Small ribosomal subunit protein uS12cz/uS12cy (rps12-A), found in Phaseolus vulgaris (Kidney bean).